We begin with the raw amino-acid sequence, 583 residues long: DNA ligase (583 aa).

Glutamate 249 contributes to the ATP binding site. Lysine 251 functions as the N6-AMP-lysine intermediate in the catalytic mechanism. Positions 256, 271, 301, 341, 416, and 422 each coordinate ATP.

It belongs to the ATP-dependent DNA ligase family. Requires Mg(2+) as cofactor.

The enzyme catalyses ATP + (deoxyribonucleotide)n-3'-hydroxyl + 5'-phospho-(deoxyribonucleotide)m = (deoxyribonucleotide)n+m + AMP + diphosphate.. Functionally, DNA ligase that seals nicks in double-stranded DNA during DNA replication, DNA recombination and DNA repair. In Pyrobaculum calidifontis (strain DSM 21063 / JCM 11548 / VA1), this protein is DNA ligase.